Here is a 1962-residue protein sequence, read N- to C-terminus: Myosin heavy chain, muscle (1962 aa).

The Myosin N-terminal SH3-like domain maps to 33-82 (DSKKSCWIPDEKEGYLLGEIKATKGDIVSVGLQGGEVRDIKSEKVEKVNP). The 692-residue stretch at 86–777 (EKIEDMADMT…VLGQMEEFRD (692 aa)) folds into the Myosin motor domain. Residue 179–186 (GESGAGKT) coordinates ATP. The tract at residues 656–678 (LNSLMTTLRSTQPHFVRCIIPNE) is actin-binding. The 30-residue stretch at 780-809 (LGKIMSWMQAWARGYLSRKGFKKLQEQRVA) folds into the IQ domain. A coiled-coil region spans residues 802-1927 (KLQEQRVALK…KFRAKGRAGS (1126 aa)). Disordered regions lie at residues 1822 to 1862 (ENEL…NHER) and 1922 to 1962 (KGRA…ENEF).

This sequence belongs to the TRAFAC class myosin-kinesin ATPase superfamily. Myosin family. As to quaternary structure, muscle myosin is a hexameric protein that consists of 2 heavy chain subunits (MHC), 2 alkali light chain subunits (MLC) and 2 regulatory light chain subunits (MLC-2). Expressed in larval and adult muscles. Isoforms containing exon 9a are expressed in indirect flight muscles, exons 9a and 9b are expressed in jump muscles, exons 9b and 9c are expressed in other larval and adult muscles.

It is found in the cytoplasm. Its subcellular location is the myofibril. Muscle contraction. In Drosophila melanogaster (Fruit fly), this protein is Myosin heavy chain, muscle (Mhc).